The primary structure comprises 272 residues: Nuclear transcription factor Y subunit A-1 (272 aa).

Disordered stretches follow at residues 1–20 and 34–106; these read MQSK…HAVQ and SFGV…PALS. 2 stretches are compositionally biased toward polar residues: residues 46 to 61 and 82 to 92; these read IPSN…GSES and KDSQAATSSRS. A Subunit association domain (SAD) motif is present at residues 175 to 198; that stretch reads YVNAKQYEGILRRRKARAKAELER. A DNA-binding region (NFYA/HAP2-type) is located at residues 205 to 230; sequence KPYLHESRHKHAMRRARASGGRFAKK. Residues 206-272 form a disordered region; it reads PYLHESRHKH…NETLNSSGAP (67 aa). Positions 211–221 are enriched in basic residues; it reads SRHKHAMRRAR. Basic and acidic residues predominate over residues 229–247; that stretch reads KKSEVEAGEDAGGRDRERG. Composition is skewed to polar residues over residues 248 to 257 and 263 to 272; these read SATNSSGSEQ and NETLNSSGAP.

This sequence belongs to the NFYA/HAP2 subunit family. Heterotrimeric transcription factor composed of three components, NF-YA, NF-YB and NF-YC. NF-YB and NF-YC must interact and dimerize for NF-YA association and DNA binding. As to expression, ubiquitous.

It is found in the nucleus. Stimulates the transcription of various genes by recognizing and binding to a CCAAT motif in promoters. The polypeptide is Nuclear transcription factor Y subunit A-1 (NFYA1) (Arabidopsis thaliana (Mouse-ear cress)).